The primary structure comprises 248 residues: 2,3-bisphosphoglycerate-dependent phosphoglycerate mutase (248 aa).

Residues 8–15 (RHGESTWN), 21–22 (TG), Arg60, 87–90 (ERHY), Lys98, and 114–115 (RR) each bind substrate. Catalysis depends on His9, which acts as the Tele-phosphohistidine intermediate. The active-site Proton donor/acceptor is Glu87. The segment at 118-137 (DTPPPALEPTDPRASYDDPR) is disordered. Residues 127–137 (TDPRASYDDPR) show a composition bias toward basic and acidic residues. 183 to 184 (GN) contributes to the substrate binding site.

It belongs to the phosphoglycerate mutase family. BPG-dependent PGAM subfamily. Homodimer.

It catalyses the reaction (2R)-2-phosphoglycerate = (2R)-3-phosphoglycerate. Its pathway is carbohydrate degradation; glycolysis; pyruvate from D-glyceraldehyde 3-phosphate: step 3/5. Catalyzes the interconversion of 2-phosphoglycerate and 3-phosphoglycerate. The sequence is that of 2,3-bisphosphoglycerate-dependent phosphoglycerate mutase from Cupriavidus necator (strain ATCC 17699 / DSM 428 / KCTC 22496 / NCIMB 10442 / H16 / Stanier 337) (Ralstonia eutropha).